The following is a 316-amino-acid chain: 4-diphosphocytidyl-2-C-methyl-D-erythritol kinase (316 aa).

Lysine 23 is a catalytic residue. An ATP-binding site is contributed by 108–118; it reads PVAGGMAGGSA. The active site involves aspartate 150.

It belongs to the GHMP kinase family. IspE subfamily.

The catalysed reaction is 4-CDP-2-C-methyl-D-erythritol + ATP = 4-CDP-2-C-methyl-D-erythritol 2-phosphate + ADP + H(+). It participates in isoprenoid biosynthesis; isopentenyl diphosphate biosynthesis via DXP pathway; isopentenyl diphosphate from 1-deoxy-D-xylulose 5-phosphate: step 3/6. Its function is as follows. Catalyzes the phosphorylation of the position 2 hydroxy group of 4-diphosphocytidyl-2C-methyl-D-erythritol. In Mycolicibacterium paratuberculosis (strain ATCC BAA-968 / K-10) (Mycobacterium paratuberculosis), this protein is 4-diphosphocytidyl-2-C-methyl-D-erythritol kinase.